We begin with the raw amino-acid sequence, 145 residues long: Ribosomal RNA large subunit methyltransferase H (145 aa).

S-adenosyl-L-methionine contacts are provided by residues L62, G94, and 113-118 (LGQLTL).

Belongs to the RNA methyltransferase RlmH family. Homodimer.

It is found in the cytoplasm. The enzyme catalyses pseudouridine(1915) in 23S rRNA + S-adenosyl-L-methionine = N(3)-methylpseudouridine(1915) in 23S rRNA + S-adenosyl-L-homocysteine + H(+). Specifically methylates the pseudouridine at position 1915 (m3Psi1915) in 23S rRNA. This chain is Ribosomal RNA large subunit methyltransferase H, found in Deinococcus deserti (strain DSM 17065 / CIP 109153 / LMG 22923 / VCD115).